Consider the following 494-residue polypeptide: Putative myristoylated protein 006R (494 aa).

Gly-2 is lipidated: N-myristoyl glycine; by host. A run of 3 helical transmembrane segments spans residues 193–213, 214–234, and 465–485; these read VAAL…GGIA, VAGR…LVVW, and WLLY…ILAF.

It belongs to the IIV-6 118L/458R family.

It is found in the membrane. This is Putative myristoylated protein 006R from Aedes vexans (Inland floodwater mosquito).